We begin with the raw amino-acid sequence, 319 residues long: ATP-dependent 6-phosphofructokinase (319 aa).

Gly11 serves as a coordination point for ATP. 21-25 (RAVVR) is a binding site for ADP. ATP is bound by residues 72 to 73 (RC) and 102 to 105 (GDGS). Asp103 is a binding site for Mg(2+). Substrate is bound at residue 125 to 127 (TID). Asp127 (proton acceptor) is an active-site residue. Arg154 provides a ligand contact to ADP. Substrate contacts are provided by residues Arg162 and 169-171 (MGR). ADP-binding positions include 185–187 (GAE), Arg211, and 213–215 (KKH). Substrate-binding positions include Glu222, Arg243, and 249–252 (HVQR).

It belongs to the phosphofructokinase type A (PFKA) family. ATP-dependent PFK group I subfamily. Prokaryotic clade 'B1' sub-subfamily. Homotetramer. The cofactor is Mg(2+).

It is found in the cytoplasm. The catalysed reaction is beta-D-fructose 6-phosphate + ATP = beta-D-fructose 1,6-bisphosphate + ADP + H(+). It participates in carbohydrate degradation; glycolysis; D-glyceraldehyde 3-phosphate and glycerone phosphate from D-glucose: step 3/4. Its activity is regulated as follows. Allosterically activated by ADP and other diphosphonucleosides, and allosterically inhibited by phosphoenolpyruvate. In terms of biological role, catalyzes the phosphorylation of D-fructose 6-phosphate to fructose 1,6-bisphosphate by ATP, the first committing step of glycolysis. The sequence is that of ATP-dependent 6-phosphofructokinase from Anoxybacillus flavithermus (strain DSM 21510 / WK1).